The chain runs to 440 residues: Xaa-Pro dipeptidase (440 aa).

Positions 244, 255, 336, 381, and 420 each coordinate Mn(2+).

It belongs to the peptidase M24B family. Bacterial-type prolidase subfamily. It depends on Mn(2+) as a cofactor.

The enzyme catalyses Xaa-L-Pro dipeptide + H2O = an L-alpha-amino acid + L-proline. Its function is as follows. Splits dipeptides with a prolyl residue in the C-terminal position. The chain is Xaa-Pro dipeptidase from Pseudoalteromonas translucida (strain TAC 125).